Reading from the N-terminus, the 444-residue chain is Tryptophan 5-hydroxylase 1 (444 aa).

The region spanning 19–94 is the ACT domain; that stretch reads TLIFSLKNEV…TVLSVDSPDQ (76 aa). A Phosphoserine; by PKA modification is found at Ser58. Residues Tyr235, Arg257, and Thr265 each coordinate L-tryptophan. Positions 272, 277, and 317 each coordinate Fe cation. Residues Ser336 and Ile366 each contribute to the L-tryptophan site.

It belongs to the biopterin-dependent aromatic amino acid hydroxylase family. As to quaternary structure, homotetramer. Interacts with DNAJC12. Fe(2+) is required as a cofactor. In terms of processing, ubiquitinated, leading to its degradation by the proteasome. Ubiquitinated is triggered by phosphorylation. Phosphorylated; triggering degradation by the proteasome.

The catalysed reaction is (6R)-L-erythro-5,6,7,8-tetrahydrobiopterin + L-tryptophan + O2 = 5-hydroxy-L-tryptophan + (4aS,6R)-4a-hydroxy-L-erythro-5,6,7,8-tetrahydrobiopterin. Its pathway is aromatic compound metabolism; serotonin biosynthesis; serotonin from L-tryptophan: step 1/2. Functionally, oxidizes L-tryptophan to 5-hydroxy-l-tryptophan in the rate-determining step of serotonin biosynthesis. This chain is Tryptophan 5-hydroxylase 1 (Tph1), found in Rattus norvegicus (Rat).